Reading from the N-terminus, the 470-residue chain is Acetyl-CoA decarbonylase/synthase complex subunit beta 2 (470 aa).

The [Ni-Fe-S] cluster site is built by C190, C193, C279, and C281.

This sequence belongs to the CdhC family. In terms of assembly, monomer. The ACDS complex is made up of alpha, epsilon, beta, gamma and delta chains with a probable stoichiometry of (alpha(2)epsilon(2))(4)-beta(8)-(gamma(1)delta(1))(8) (Potential). [Ni-Fe-S] cluster serves as cofactor.

It carries out the reaction Co(I)-[corrinoid Fe-S protein] + acetyl-CoA + H(+) = methyl-Co(III)-[corrinoid Fe-S protein] + CO + CoA. It functions in the pathway one-carbon metabolism; methanogenesis from acetate. Functionally, part of a complex that catalyzes the reversible cleavage of acetyl-CoA, allowing growth on acetate as sole source of carbon and energy. The alpha-epsilon complex generates CO from CO(2), while the beta subunit (this protein) combines the CO with CoA and a methyl group to form acetyl-CoA. The methyl group, which is incorporated into acetyl-CoA, is transferred to the beta subunit by a corrinoid iron-sulfur protein (the gamma-delta complex). This Methanosarcina mazei (strain ATCC BAA-159 / DSM 3647 / Goe1 / Go1 / JCM 11833 / OCM 88) (Methanosarcina frisia) protein is Acetyl-CoA decarbonylase/synthase complex subunit beta 2 (cdhC2).